The chain runs to 144 residues: Large ribosomal subunit protein uL16m (144 aa).

It belongs to the universal ribosomal protein uL16 family.

It is found in the mitochondrion. The protein is Large ribosomal subunit protein uL16m (mrpl16) of Dictyostelium discoideum (Social amoeba).